The sequence spans 841 residues: Nuclear RNA export factor 2 (841 aa).

An RNA-binding unit probably involved in Piwi-dependent recruitment and single-stranded RNA-PPNP complex formation region spans residues 1–285 (MPNQMRVLDF…NFELVDGKPF (285 aa)). 3 LRR repeats span residues 200–221 (RLNG…TLLA), 224–245 (DYAL…CRAL), and 249–270 (RARE…PANI). Residues 286 to 553 (NMLHKIFSPL…EYVRAVKEVF (268 aa)) are necessary for silencing function. In terms of domain architecture, RRM spans 325–408 (WHAFMIPDPS…IFRYYLRMNV (84 aa)). 3 LRR repeats span residues 475–496 (TCSE…HVLG), 500–521 (CLRA…HSLG), and 524–545 (PLKS…PSEY). One can recognise an NTF2 domain in the interval 585–758 (LVGAFLENYL…LKIANERLHI (174 aa)). The TAP-C domain maps to 788 to 841 (DVKDHKLLLFQEVTGLISTWVTSIVEEADWDFERALKLFIQKNADHEIPDLAFA).

This sequence belongs to the NXF family. In the ovaries, part of a complex composed of at least Panx, nxf2, piwi and Nxt1. The complex is knowns as Panx-induced cotranscriptional silencing (PICTS) complex, Panx-nxf2-dependent TAP/p15 silencing (Pandas complex), SFiNX (silencing factor interacting nuclear export variant) or piwi-Panx-nxf2-p15 (PPNP) complex. Interacts (via TAP-C domain) with Panx (via NIR region); the interaction is direct. Interacts (via NTF2 domain) with Nxt1; the interaction is direct and prevents Nxt1 binding to nucleoporins. Interacts with sbr/Nxf1. As to expression, expressed in female gonads (at protein level). Expressed ubiquitously.

Its subcellular location is the cytoplasm. It localises to the nucleus. It is found in the nucleoplasm. In terms of biological role, may be involved in the export of mRNA from the nucleus to the cytoplasm. In the ovaries, forms a complex with nxf2, piwi and Nxt1 which acts as effectors of cotranscriptional transposon silencing. On recruitment to a target transcript, interacts with single stranded RNA, thereby anchoring the complex via the nascent target transcript to chromatin and allowing Panx to recruit silencing effectors to establishing repressive heterochromatin at transposon loci. Does not affect piRNA biogenesis. The interaction with Panx stabilizes the nuclear protein complex. Does not bind nucleoporins, but regulates sbr/Nxf1 binding to nucleoporins and, indirectly, transposon exports. This chain is Nuclear RNA export factor 2 (nxf2), found in Drosophila melanogaster (Fruit fly).